A 539-amino-acid chain; its full sequence is Putative cysteine ligase BshC (539 aa).

Positions 249–270 (VETNDEVTNRLNESQAAMKRAG) form a coiled coil.

This sequence belongs to the BshC family.

Its function is as follows. Involved in bacillithiol (BSH) biosynthesis. May catalyze the last step of the pathway, the addition of cysteine to glucosamine malate (GlcN-Mal) to generate BSH. This Bacillus pumilus (strain SAFR-032) protein is Putative cysteine ligase BshC.